We begin with the raw amino-acid sequence, 874 residues long: Isopimaradiene synthase, chloroplastic (874 aa).

The segment covering 1–12 has biased composition (polar residues); the sequence is MALPSSSLSSRI. Residues 1 to 20 form a disordered region; it reads MALPSSSLSSRIPTGPHPLT. The transit peptide at 1–37 directs the protein to the chloroplast; that stretch reads MALPSSSLSSRIPTGPHPLTHTQCIPHFSTTINAGIS. Mg(2+)-binding residues include Asp407, Asp409, Asp626, Asp630, Asn770, and Glu778. The DXDD motif motif lies at 407–410; the sequence is DIDD. Residues 626-630 carry the DDXXD motif motif; sequence DDLYD.

It belongs to the terpene synthase family. Tpsd subfamily. Mg(2+) is required as a cofactor. Mn(2+) serves as cofactor.

It is found in the plastid. It localises to the chloroplast. The enzyme catalyses (+)-copalyl diphosphate = isopimara-8(14),15-diene + diphosphate. The protein operates within terpene metabolism; oleoresin biosynthesis. Functionally, terpene synthase (TPS) involved in the biosynthesis of diterpene natural products included in conifer oleoresin secretions and volatile emissions; these compounds contribute to biotic and abiotic stress defense against herbivores and pathogens. Catalyzes the conversion of (+)-copalyl diphosphate ((+)-CPP) to isopimaradiene. The sequence is that of Isopimaradiene synthase, chloroplastic from Picea sitchensis (Sitka spruce).